The primary structure comprises 304 residues: MQIIVKNISYIYNRKTALALKALDDSSCIINQGEHVAIIGSTGSGKTTFIEHLNALLIPETGTINWIFENEHKKTKEKYLEDVVLKRTYFKKVKKAKDIRRRIGVVFQFAEYQIFEETIEKDIMFGPRSYGVSKEEAKQRAAKYLEMVGLPLEFLEKNPFGLSGGQKRRVALAGILAIEPDFLVLDEPTAGLDPQGVKDILDIFDNINKNGKTVIMVTHDLDNVLERTKRTLVFDKGKLIRDAGTYEILKDEKFLVENKLKSPKLITFVNKLEQRGIFLKPVTSIDKLAIELNIYLRNKQQSNE.

Positions 3–261 (IIVKNISYIY…EKFLVENKLK (259 aa)) constitute an ABC transporter domain. Residue 40-47 (GSTGSGKT) participates in ATP binding.

This sequence belongs to the ABC transporter superfamily. Energy-coupling factor EcfA family. As to quaternary structure, forms a stable energy-coupling factor (ECF) transporter complex composed of 2 membrane-embedded substrate-binding proteins (S component), 2 ATP-binding proteins (A component) and 2 transmembrane proteins (T component).

The protein localises to the cell membrane. Functionally, ATP-binding (A) component of a common energy-coupling factor (ECF) ABC-transporter complex. Unlike classic ABC transporters this ECF transporter provides the energy necessary to transport a number of different substrates. The polypeptide is Energy-coupling factor transporter ATP-binding protein EcfA2 (Mycoplasmopsis pulmonis (strain UAB CTIP) (Mycoplasma pulmonis)).